The chain runs to 572 residues: Phenylalanine--tRNA ligase beta subunit (572 aa).

Residues 278-353 (LTPKEFEVEF…IAYGYNEIKP (76 aa)) enclose the B5 domain. Mg(2+) contacts are provided by D331, D337, E340, and D341.

Belongs to the phenylalanyl-tRNA synthetase beta subunit family. Type 2 subfamily. As to quaternary structure, tetramer of two alpha and two beta subunits. The cofactor is Mg(2+).

Its subcellular location is the cytoplasm. It carries out the reaction tRNA(Phe) + L-phenylalanine + ATP = L-phenylalanyl-tRNA(Phe) + AMP + diphosphate + H(+). The polypeptide is Phenylalanine--tRNA ligase beta subunit (Thermococcus onnurineus (strain NA1)).